Reading from the N-terminus, the 483-residue chain is Dual specificity protein kinase CLK1 (483 aa).

Residues 1-49 (MRHSKRTYCPDWDERDWDYGTWRSSSSHKRKKRSHSSAREQKRCRYDHS) are disordered. The span at 26-36 (SSHKRKKRSHS) shows a compositional bias: basic residues. Residues 29–33 (KRKKR) carry the Nuclear localization signal motif. The span at 37–49 (SAREQKRCRYDHS) shows a compositional bias: basic and acidic residues. The residue at position 61 (Ser-61) is a Phosphoserine. Over residues 84-111 (EPGHPYGEPGSRYQMHSSKSSGRSGRSS) the composition is skewed to low complexity. A disordered region spans residues 84–146 (EPGHPYGEPG…SRSVEDDEEG (63 aa)). Residues 112–137 (YKSKHRSRHHTSQHHSHGKSHRRKRS) show a composition bias toward basic residues. Ser-139 carries the phosphoserine modification. Residues 160–476 (YEIVDTLGEG…LKEALKHPFF (317 aa)) enclose the Protein kinase domain. Residues 166–174 (LGEGAFGKV) and Lys-190 each bind ATP. Asp-287 functions as the Proton acceptor in the catalytic mechanism.

It belongs to the protein kinase superfamily. CMGC Ser/Thr protein kinase family. Lammer subfamily. As to quaternary structure, interacts with PPIG and UBL5. Post-translationally, autophosphorylates on all three types of residues.

It is found in the nucleus. The enzyme catalyses L-seryl-[protein] + ATP = O-phospho-L-seryl-[protein] + ADP + H(+). It carries out the reaction L-threonyl-[protein] + ATP = O-phospho-L-threonyl-[protein] + ADP + H(+). The catalysed reaction is L-tyrosyl-[protein] + ATP = O-phospho-L-tyrosyl-[protein] + ADP + H(+). Regulates splicing of its own pre-mRNA according to its kinase activity; increased expression of the catalytically active form influences splicing to generate the catalytically inactive splicing variant lacking the kinase domain. Leucettine L41 inhibits its kinase activity and affects the regulation of alternative splicing mediated by phosphorylation of SR proteins. Its function is as follows. Dual specificity kinase acting on both serine/threonine and tyrosine-containing substrates. Phosphorylates serine- and arginine-rich (SR) proteins of the spliceosomal complex and may be a constituent of a network of regulatory mechanisms that enable SR proteins to control RNA splicing. Phosphorylates: SRSF1, SRSF3 and PTPN1. Regulates the alternative splicing of tissue factor (F3) pre-mRNA in endothelial cells. The chain is Dual specificity protein kinase CLK1 from Mus musculus (Mouse).